A 470-amino-acid chain; its full sequence is 3-isopropylmalate dehydratase large subunit (470 aa).

3 residues coordinate [4Fe-4S] cluster: Cys351, Cys411, and Cys414.

The protein belongs to the aconitase/IPM isomerase family. LeuC type 1 subfamily. In terms of assembly, heterodimer of LeuC and LeuD. [4Fe-4S] cluster is required as a cofactor.

It catalyses the reaction (2R,3S)-3-isopropylmalate = (2S)-2-isopropylmalate. It participates in amino-acid biosynthesis; L-leucine biosynthesis; L-leucine from 3-methyl-2-oxobutanoate: step 2/4. Its function is as follows. Catalyzes the isomerization between 2-isopropylmalate and 3-isopropylmalate, via the formation of 2-isopropylmaleate. This is 3-isopropylmalate dehydratase large subunit from Rhodopseudomonas palustris (strain BisA53).